The following is a 727-amino-acid chain: Non-structural protein 4 (727 aa).

Disordered stretches follow at residues 1–38 and 671–727; these read MNQS…PSEG and GNSM…KLSK. Polar residues predominate over residues 17–38; sequence RTPSALSSNSETPGSMSSPSEG. Basic residues predominate over residues 712–727; that stretch reads SRRKARKARAASKLSK.

The protein is Non-structural protein 4 of Rice dwarf virus (isolate Fujian) (RDV).